We begin with the raw amino-acid sequence, 382 residues long: Sphingoid long-chain base transporter RSB1 (382 aa).

The Extracellular segment spans residues 1 to 34; that stretch reads MSNATNNTLGSLLPQLEAAANSNSLYGGMVPNLR. 2 N-linked (GlcNAc...) asparagine glycosylation sites follow: Asn3 and Asn6. The helical transmembrane segment at 35–55 threads the bilayer; that stretch reads FNITMIVIWGILLTIHVVQLL. The Cytoplasmic portion of the chain corresponds to 56–57; the sequence is MR. A helical membrane pass occupies residues 58–78; that stretch reads QYWFSIAFICTGILEVLGYIG. Residues 79–90 lie on the Extracellular side of the membrane; sequence RTWSHSNVADMD. A helical transmembrane segment spans residues 91–111; sequence AFLLNMICLTIAPVFTMGGIY. Over 112–135 the chain is Cytoplasmic; that stretch reads YQLAKLIEVYGHRFSLLPSPMAYS. Residues 136–156 traverse the membrane as a helical segment; it reads FIFICSDIVSLVVQAVGGGLC. At 157–171 the chain is on the extracellular side; the sequence is GVAVTDGTSTTTGNH. The chain crosses the membrane as a helical span at residues 172–192; the sequence is VFIAGLAIQVASMAIFLMLWF. Residues 193–241 lie on the Cytoplasmic side of the membrane; the sequence is HFLFRIYISVRWEHINSRPISLSLLKISQTEVDYLYREKFHFLRLEPKR. A helical transmembrane segment spans residues 242-262; that stretch reads WVFHYFNLAMTVAVLTIFTRC. The Extracellular segment spans residues 263–281; sequence CYRLAELVVGWDGYLITHE. A helical transmembrane segment spans residues 282-302; sequence WYFIILDALMMAIATVTLTIF. The Cytoplasmic segment spans residues 303–382; that stretch reads HPGFAFKGRS…LFSSKKKAKL (80 aa).

It belongs to the lipid-translocating exporter (LTE) (TC 9.A.26.1) family.

It localises to the cell membrane. Its function is as follows. Catalyzes the ATP-dependent translocation of sphingoid long-chain bases (LCBs) from the cytoplasmic site toward the extracytoplasmic side of the membrane (flip-flop). Involved in the establishment of the functional lipid asymmetry of the plasma membrane. Regulates intracellular levels of LCBs, sphingolipid precursors that are growth inhibitory at increased levels. The polypeptide is Sphingoid long-chain base transporter RSB1 (RSB1) (Saccharomyces cerevisiae (strain Lalvin EC1118 / Prise de mousse) (Baker's yeast)).